Here is a 152-residue protein sequence, read N- to C-terminus: uncharacterized protein (152 aa).

This is an uncharacterized protein from Acanthamoeba polyphaga (Amoeba).